The chain runs to 777 residues: Hepatocyte growth factor-regulated tyrosine kinase substrate (777 aa).

Residues 15-143 (ATSQLLLETD…IMKVEGHVFP (129 aa)) enclose the VHS domain. The FYVE-type zinc finger occupies 160–220 (WVDAEECHRC…VCEPCFEQLN (61 aa)). 6 residues coordinate Zn(2+): cysteine 166, cysteine 169, cysteine 182, cysteine 185, cysteine 190, and cysteine 193. Position 207 is an N6-acetyllysine (lysine 207). 2 residues coordinate Zn(2+): cysteine 212 and cysteine 215. Residues 223–319 (AEGKAASTTE…SPVNSSAPLA (97 aa)) are disordered. The tract at residues 225–541 (GKAASTTELP…QRLQEQEKER (317 aa)) is interaction with SNX1. A UIM domain is found at 258-277 (QEEEELQLALALSQSEAEEK). Residues 292 to 311 (AEPTPVASSAPPASSLYSSP) show a composition bias toward low complexity. Phosphotyrosine is present on residues tyrosine 308, tyrosine 329, and tyrosine 334. The interval 338–370 (KQEEARKSPTPSAPVPLTEPTAQPGEGHAIPAN) is disordered. The interval 443–541 (SINTMHPQLL…QRLQEQEKER (99 aa)) is interaction with SNAP25 and TRAK2. The interaction with STAM stretch occupies residues 452 to 570 (LELLNQLDER…FSLPYAQLQA (119 aa)). The tract at residues 478 to 777 (ARGALSALRE…GSEAQLISFD (300 aa)) is interaction with NF2. Residue lysine 549 is modified to N6-succinyllysine. Low complexity predominate over residues 645–658 (AAAQGPAGPTTSPA). Disordered regions lie at residues 645 to 698 (AAAQ…YMGS) and 712 to 777 (NLMP…ISFD). Polar residues-rich tracts occupy residues 659 to 698 (YSSYQPTPTQGYQTVASQAPQSLPAISQPPQSGTMGYMGS) and 730 to 739 (PYISGQQPVY). Low complexity predominate over residues 753–777 (PPVAQQPPAQGPPAQGSEAQLISFD).

Component of the ESCRT-0 complex composed of STAM or STAM2 and HGS. Part of a complex at least composed of HSG, STAM2 (or probably STAM) and EPS15. Interacts with STAM. Interacts with STAM2. Interacts with EPS15; the interaction is direct, calcium-dependent and inhibited by SNAP25. Identified in a complex with STAM and LITAF. Found in a complex with STAM and E3 ligase ITCH and DTX3L. Interacts with E3 ligase DTX3L; the interaction brings together STAM and HSG, promotes their recruitment to early endosomes and decreases STAM and HGS ubiquitination by ITCH. Interacts with NF2; the interaction is direct. Interacts with ubiquitin; the interaction is direct. Interacts with VPS37C. Interacts with SMAD1, SMAD2 and SMAD3. Interacts with TSG101; the interaction mediates the association with the ESCRT-I complex. Interacts with SNAP25; the interaction is direct and decreases with addition of increasing concentrations of free calcium. Interacts with SNX1; the interaction is direct. Component of a 550 kDa membrane complex at least composed of HGS and SNX1 but excluding EGFR. Interacts with TRAK1. Interacts with TRAK2. Component of the CART complex, at least composed of ACTN4, HGS/HRS, MYO5B and TRIM3. Interacts (via UIM domain) with UBQLN1 (via ubiquitin-like domain). Interacts with ARRDC3. Identified in a complex containing at least ARRDC4, AVPR2 and HGS. Interacts with LAPTM4B; promotes HGS ubiquitination. Post-translationally, phosphorylated on Tyr-334. A minor site of phosphorylation on Tyr-329 is detected. Phosphorylation occurs in response to EGF, IL-2, GM-CSF and HGF. Ubiquitinated by ITCH.

Its subcellular location is the cytoplasm. It localises to the early endosome membrane. It is found in the endosome. The protein localises to the multivesicular body membrane. Involved in intracellular signal transduction mediated by cytokines and growth factors. When associated with STAM it suppresses DNA signaling upon stimulation by IL-2 and GM-CSF. Could be a direct effector of PI3-kinase in vesicular pathway via early endosomes and may regulate trafficking to early and late endosomes by recruiting clathrin. May concentrate ubiquitinated receptors within clathrin-coated regions. Involved in down-regulation of receptor tyrosine kinase via multivesicular body (MVBs) when complexed with STAM (ESCRT-0 complex). The ESCRT-0 complex binds ubiquitin and acts as a sorting machinery that recognizes ubiquitinated receptors and transfers them to further sequential lysosomal sorting/trafficking processes. May contribute to the efficient recruitment of SMADs to the activin receptor complex. Involved in receptor recycling via its association with the CART complex, a multiprotein complex required for efficient transferrin receptor recycling but not for EGFR degradation. The chain is Hepatocyte growth factor-regulated tyrosine kinase substrate (HGS) from Bos taurus (Bovine).